The following is a 373-amino-acid chain: T-protein (373 aa).

Residues 1–90 enclose the Chorismate mutase domain; the sequence is MVAELTALRD…ESYTSENDKG (90 aa). One can recognise a Prephenate/arogenate dehydrogenase domain in the interval 99 to 361; the sequence is RPVVIVGGKG…DHAKRFLVES (263 aa).

This sequence in the C-terminal section; belongs to the prephenate/arogenate dehydrogenase family.

Its subcellular location is the cytoplasm. It catalyses the reaction chorismate = prephenate. It carries out the reaction prephenate + NAD(+) = 3-(4-hydroxyphenyl)pyruvate + CO2 + NADH. The protein operates within amino-acid biosynthesis; L-tyrosine biosynthesis; (4-hydroxyphenyl)pyruvate from prephenate (NAD(+) route): step 1/1. Its pathway is metabolic intermediate biosynthesis; prephenate biosynthesis; prephenate from chorismate: step 1/1. The protein is T-protein (tyrA) of Enterobacter agglomerans (Erwinia herbicola).